The chain runs to 246 residues: Osmotin-like protein OSML13 (246 aa).

The signal sequence occupies residues 1–21 (MAYLRSSFVFFLLAFVTYTYA). 8 disulfide bridges follow: C30–C225, C72–C82, C87–C93, C141–C213, C146–C196, C154–C164, C168–C177, and C178–C183.

The protein belongs to the thaumatin family.

In Solanum commersonii (Commerson's wild potato), this protein is Osmotin-like protein OSML13.